We begin with the raw amino-acid sequence, 214 residues long: Capsid assembly scaffolding protein (214 aa).

Positions 36–105 form a coiled coil; that stretch reads KEKFDAVNSE…QQLKYEHALE (70 aa). Residues 154 to 190 are disordered; the sequence is KGTEPNGGVQGTPPPGKGADLGGLPTKKNPFKQGPDF.

It belongs to the SPP1-like scaffolding protein family. Homodimer. Interacts with the capsid protein gp13.

Its function is as follows. Scaffolding protein involved in the icosahedric procapsid assembly. Coassembles with the capsid proteins to form the procapsid, in which the scaffolding protein is found within the external shell of icosahedrally arranged capsid protein subunits. In a subsequent step the scaffolding protein molecules are released from the procapsid. The protein is Capsid assembly scaffolding protein of Bacillus phage SPP1 (Bacteriophage SPP1).